Consider the following 307-residue polypeptide: Serine/threonine-protein phosphatase 4 catalytic subunit B (307 aa).

The Mn(2+) site is built by Asp54, His56, Asp82, and Asn114. Residue His115 is the Proton donor of the active site. Mn(2+) is bound by residues His164 and His238. Leu307 is subject to Leucine methyl ester.

This sequence belongs to the PPP phosphatase family. PP-4 (PP-X) subfamily. Serine/threonine-protein phosphatase 4 (PP4) occurs in different assemblies of the catalytic and one or more regulatory subunits. The cofactor is Mn(2+).

It localises to the cytoplasm. The protein localises to the cytoskeleton. The protein resides in the microtubule organizing center. It is found in the centrosome. It carries out the reaction O-phospho-L-seryl-[protein] + H2O = L-seryl-[protein] + phosphate. The enzyme catalyses O-phospho-L-threonyl-[protein] + H2O = L-threonyl-[protein] + phosphate. Protein phosphatase that regulates many processes such as microtubule organization at centrosomes. The protein is Serine/threonine-protein phosphatase 4 catalytic subunit B (ppp4cb) of Danio rerio (Zebrafish).